We begin with the raw amino-acid sequence, 330 residues long: tRNA-modifying protein YgfZ (330 aa).

Residues W28 and W190 each contribute to the folate site.

It belongs to the tRNA-modifying YgfZ family.

It localises to the cytoplasm. Its function is as follows. Folate-binding protein involved in regulating the level of ATP-DnaA and in the modification of some tRNAs. It is probably a key factor in regulatory networks that act via tRNA modification, such as initiation of chromosomal replication. The polypeptide is tRNA-modifying protein YgfZ (Yersinia pseudotuberculosis serotype O:1b (strain IP 31758)).